The chain runs to 72 residues: Translation initiation factor IF-1 (72 aa).

One can recognise an S1-like domain in the interval 1 to 72 (MAKEDNIEMQ…SKGRIVFRSR (72 aa)).

Belongs to the IF-1 family. Component of the 30S ribosomal translation pre-initiation complex which assembles on the 30S ribosome in the order IF-2 and IF-3, IF-1 and N-formylmethionyl-tRNA(fMet); mRNA recruitment can occur at any time during PIC assembly.

It is found in the cytoplasm. In terms of biological role, one of the essential components for the initiation of protein synthesis. Stabilizes the binding of IF-2 and IF-3 on the 30S subunit to which N-formylmethionyl-tRNA(fMet) subsequently binds. Helps modulate mRNA selection, yielding the 30S pre-initiation complex (PIC). Upon addition of the 50S ribosomal subunit IF-1, IF-2 and IF-3 are released leaving the mature 70S translation initiation complex. In Klebsiella pneumoniae subsp. pneumoniae (strain ATCC 700721 / MGH 78578), this protein is Translation initiation factor IF-1.